The following is an 83-amino-acid chain: Probable calcium-binding protein CML28 (83 aa).

2 EF-hand domains span residues 5–40 and 43–75; these read TEKA…LGSV and EDIK…NRGL. Ca(2+)-binding residues include Asp18, Asn20, Asp22, Lys24, Glu29, Asp53, Asp55, Asp57, Tyr59, and Glu64.

Functionally, potential calcium sensor. This chain is Probable calcium-binding protein CML28 (CML28), found in Arabidopsis thaliana (Mouse-ear cress).